Here is a 246-residue protein sequence, read N- to C-terminus: Probable transcriptional regulatory protein NT01CX_1819 (246 aa).

The protein belongs to the TACO1 family.

The protein resides in the cytoplasm. The sequence is that of Probable transcriptional regulatory protein NT01CX_1819 from Clostridium novyi (strain NT).